A 441-amino-acid chain; its full sequence is Probable dihydroorotase-like protein (441 aa).

Residues 121–140 form a disordered region; it reads VNAHHQPPGDPQAENRPDSA.

The protein belongs to the metallo-dependent hydrolases superfamily. DHOase family. PyrC' subfamily.

Functionally, non-functional DHOase. The sequence is that of Probable dihydroorotase-like protein (pyrC') from Synechocystis sp. (strain ATCC 27184 / PCC 6803 / Kazusa).